The following is a 428-amino-acid chain: Histidine--tRNA ligase (428 aa).

Belongs to the class-II aminoacyl-tRNA synthetase family. As to quaternary structure, homodimer.

It is found in the cytoplasm. It catalyses the reaction tRNA(His) + L-histidine + ATP = L-histidyl-tRNA(His) + AMP + diphosphate + H(+). This chain is Histidine--tRNA ligase, found in Lactobacillus gasseri (strain ATCC 33323 / DSM 20243 / BCRC 14619 / CIP 102991 / JCM 1131 / KCTC 3163 / NCIMB 11718 / NCTC 13722 / AM63).